The following is a 767-amino-acid chain: Ribonucleoside-diphosphate reductase large subunit (767 aa).

Substrate is bound by residues threonine 176, 191–192 (SC), glycine 222, 392–396 (NLCAE), and 578–582 (PTAGT). Cysteine 192 and cysteine 408 form a disulfide bridge. The active-site Proton acceptor is asparagine 392. The Cysteine radical intermediate role is filled by cysteine 394. Glutamate 396 (proton acceptor) is an active-site residue.

Belongs to the ribonucleoside diphosphate reductase large chain family. Heterotetramer composed of a homodimer of the large subunit (R1) and a homodimer of the small subunit (R2). Larger multisubunit protein complex are also active, composed of (R1)n(R2)n.

The catalysed reaction is a 2'-deoxyribonucleoside 5'-diphosphate + [thioredoxin]-disulfide + H2O = a ribonucleoside 5'-diphosphate + [thioredoxin]-dithiol. In terms of biological role, ribonucleoside-diphosphate reductase holoenzyme provides the precursors necessary for viral DNA synthesis. Allows virus growth in non-dividing cells, as well as reactivation from latency in infected hosts. Catalyzes the biosynthesis of deoxyribonucleotides from the corresponding ribonucleotides. The sequence is that of Ribonucleoside-diphosphate reductase large subunit from Saimiri sciureus (Common squirrel monkey).